We begin with the raw amino-acid sequence, 359 residues long: Agropine synthesis conjugase (359 aa).

In terms of domain architecture, SIS spans 28–171; it reads TVAKFGRATA…IGGILNEREN (144 aa).

This Rhizobium rhizogenes (Agrobacterium rhizogenes) protein is Agropine synthesis conjugase (mas2).